The following is a 99-amino-acid chain: MALELSDVKRIAHLARIEVSEGEAAQTLTQLNQFFSLVEQMQAVDTTGIEPMAHPIEQVQAQAQRLRDDAVTEADRRADYQQCAPATEAGLYLVPKVIE.

It belongs to the GatC family. Heterotrimer of A, B and C subunits.

The catalysed reaction is L-glutamyl-tRNA(Gln) + L-glutamine + ATP + H2O = L-glutaminyl-tRNA(Gln) + L-glutamate + ADP + phosphate + H(+). It carries out the reaction L-aspartyl-tRNA(Asn) + L-glutamine + ATP + H2O = L-asparaginyl-tRNA(Asn) + L-glutamate + ADP + phosphate + 2 H(+). Its function is as follows. Allows the formation of correctly charged Asn-tRNA(Asn) or Gln-tRNA(Gln) through the transamidation of misacylated Asp-tRNA(Asn) or Glu-tRNA(Gln) in organisms which lack either or both of asparaginyl-tRNA or glutaminyl-tRNA synthetases. The reaction takes place in the presence of glutamine and ATP through an activated phospho-Asp-tRNA(Asn) or phospho-Glu-tRNA(Gln). This Ralstonia pickettii (strain 12J) protein is Aspartyl/glutamyl-tRNA(Asn/Gln) amidotransferase subunit C.